Here is an 84-residue protein sequence, read N- to C-terminus: Small ribosomal subunit protein uS15 (84 aa).

The protein belongs to the universal ribosomal protein uS15 family. Part of the 30S ribosomal subunit. Forms a bridge to the 50S subunit in the 70S ribosome, contacting the 23S rRNA.

One of the primary rRNA binding proteins, it binds directly to 16S rRNA where it helps nucleate assembly of the platform of the 30S subunit by binding and bridging several RNA helices of the 16S rRNA. Functionally, forms an intersubunit bridge (bridge B4) with the 23S rRNA of the 50S subunit in the ribosome. The protein is Small ribosomal subunit protein uS15 of Akkermansia muciniphila (strain ATCC BAA-835 / DSM 22959 / JCM 33894 / BCRC 81048 / CCUG 64013 / CIP 107961 / Muc).